The primary structure comprises 700 residues: Kin of IRRE-like protein 2 (700 aa).

A signal peptide spans 1 to 19; the sequence is MLASALLVFLCCFKGHAGS. Residues 20 to 507 lie on the Extracellular side of the membrane; sequence SPHFLQQPED…GRRDLLPTVR (488 aa). 5 Ig-like C2-type domains span residues 21 to 115, 120 to 219, 224 to 304, 309 to 391, and 395 to 497; these read PHFL…AQLH, PEAP…VTLS, PMVT…TALE, PILQ…ARLT, and PPVV…QIHL. A disulfide bond links C42 and C100. The N-linked (GlcNAc...) asparagine glycan is linked to N140. 2 disulfide bridges follow: C143–C201 and C245–C288. The Cell attachment site signature appears at 146 to 148; it reads RGD. N-linked (GlcNAc...) asparagine glycosylation is present at N298. 2 disulfide bridges follow: C330-C372 and C416-C482. The N-linked (GlcNAc...) asparagine glycan is linked to N481. Residues 508–528 form a helical membrane-spanning segment; the sequence is IVAGAASAATSLLMVITGVVL. Residues 529 to 700 are Cytoplasmic-facing; sequence CCWRHGSLSK…PSHQRLQTHV (172 aa). Residues 542-576 are disordered; it reads LVRIPGSSEGSSSRGPEEETGSSEDRGPIVHTDHS. S563 is modified (phosphoserine). The segment covering 564 to 576 has biased composition (basic and acidic residues); the sequence is SEDRGPIVHTDHS. Phosphotyrosine is present on residues Y595, Y596, and Y653. Residues 671-700 form a disordered region; that stretch reads FGPPELSSGTPPFPYATLSPPSHQRLQTHV. Residues 689 to 700 are compositionally biased toward polar residues; sequence SPPSHQRLQTHV.

Belongs to the immunoglobulin superfamily. Homodimer. Interacts with NPHS2/podocin (via the C-terminus). Interacts with NPHS1 (via the Ig-like domains). Interacts with FYN. Post-translationally, N-glycosylated. In terms of processing, phosphorylated at Ser-548 or Ser-549; due to site ambiguity, the exact position of the serine phosphorylation could not be determined. Phosphorylation at residues Tyr-631 and/or Tyr-632. FYN mediates tyrosine phosphorylation in pancreatic beta-cells. The extracellular domain is cleaved leading to the generation of a soluble fragment and a membrane-bound C-terminal fragment, which is further cleaved by gamma-secretase. As to expression, highly expressed in beta-cells of the pancreatic islets. Expression is seen in podocytes of kidney glomeruli, and in the cerebellum and hindbrain at 12.5 dpc, in the spinal cord at 10.5 dpc, and in retina and hypothalamus at 13.5 dpc.

The protein localises to the cell membrane. Functionally, may regulate basal insulin secretion. The polypeptide is Kin of IRRE-like protein 2 (Kirrel2) (Mus musculus (Mouse)).